The primary structure comprises 171 residues: 3-hydroxydecanoyl-[acyl-carrier-protein] dehydratase (171 aa).

His-70 is an active-site residue.

Belongs to the thioester dehydratase family. FabA subfamily. In terms of assembly, homodimer.

It is found in the cytoplasm. The enzyme catalyses a (3R)-hydroxyacyl-[ACP] = a (2E)-enoyl-[ACP] + H2O. It catalyses the reaction (3R)-hydroxydecanoyl-[ACP] = (2E)-decenoyl-[ACP] + H2O. It carries out the reaction (2E)-decenoyl-[ACP] = (3Z)-decenoyl-[ACP]. It functions in the pathway lipid metabolism; fatty acid biosynthesis. Its function is as follows. Necessary for the introduction of cis unsaturation into fatty acids. Catalyzes the dehydration of (3R)-3-hydroxydecanoyl-ACP to E-(2)-decenoyl-ACP and then its isomerization to Z-(3)-decenoyl-ACP. Can catalyze the dehydratase reaction for beta-hydroxyacyl-ACPs with saturated chain lengths up to 16:0, being most active on intermediate chain length. This is 3-hydroxydecanoyl-[acyl-carrier-protein] dehydratase from Pseudomonas fluorescens (strain SBW25).